The sequence spans 123 residues: Galectin-2 (123 aa).

A Galectin domain is found at 4-123; it reads KVEIMNMDMK…LRYLSVQGGF (120 aa). Residue 65–71 coordinates a beta-D-galactoside; it reads WGKEQRD.

Homodimer.

In terms of biological role, this protein binds beta-galactoside. Its physiological function is not yet known. This chain is Galectin-2 (LGALS2), found in Sus scrofa (Pig).